The chain runs to 156 residues: Small ribosomal subunit protein uS7 (156 aa).

It belongs to the universal ribosomal protein uS7 family. As to quaternary structure, part of the 30S ribosomal subunit. Contacts proteins S9 and S11.

One of the primary rRNA binding proteins, it binds directly to 16S rRNA where it nucleates assembly of the head domain of the 30S subunit. Is located at the subunit interface close to the decoding center, probably blocks exit of the E-site tRNA. This is Small ribosomal subunit protein uS7 from Shigella dysenteriae serotype 1 (strain Sd197).